Consider the following 303-residue polypeptide: MENLKNELLEAQVGKVLENEPLANHTTMKIGGPADLLIIPKDIDAVKTIMDHVKKHQTNWTVIGRGSNLLVLDKGIRGVVLKLGTGLDHLTVNDEEITVGGGYSVVRLATSLSKQGLSGLEFAAGIPGSIGGAVYMNAGAHGSDISKILVKARILFEDGSIEWLTNEQMNFSYRTSVLQKERPGIVLEAVFKLKQDDREKITKKMQQNKDYRKETQPYNRPCAGSIFRNPLPEYAGQLVEKANLKGYQLGGARISDMHGNFIVNAGGATAQDVLDLIQFIQKKIKEDYNVEMHTEVEIIGEEN.

The region spanning 30 to 196 is the FAD-binding PCMH-type domain; that stretch reads IGGPADLLII…LEAVFKLKQD (167 aa). The active site involves Arg174. The Proton donor role is filled by Ser225. Glu295 is a catalytic residue.

The protein belongs to the MurB family. FAD serves as cofactor.

Its subcellular location is the cytoplasm. The enzyme catalyses UDP-N-acetyl-alpha-D-muramate + NADP(+) = UDP-N-acetyl-3-O-(1-carboxyvinyl)-alpha-D-glucosamine + NADPH + H(+). It participates in cell wall biogenesis; peptidoglycan biosynthesis. In terms of biological role, cell wall formation. This Bacillus pumilus (strain SAFR-032) protein is UDP-N-acetylenolpyruvoylglucosamine reductase.